The following is a 133-amino-acid chain: NLP effector protein 14 (133 aa).

Residues Met-1–Asp-9 carry the Conserved undecapeptide motifI I motif. The short motif at Gly-16–Glu-22 is the Hepta-peptide GHRHDWE motif II element.

This sequence belongs to the Necrosis inducing protein (NPP1) family.

Its subcellular location is the secreted. Secreted effector that contributes strongly to virulence during infection by P.capsici. Causes large necrotic areas in both host C.annuum and non-host N.benthamiana. This Phytophthora capsici protein is NLP effector protein 14.